The primary structure comprises 419 residues: Chalcone synthase D (419 aa).

Cysteine 164 is an active-site residue.

The protein belongs to the thiolase-like superfamily. Chalcone/stilbene synthases family.

The enzyme catalyses (E)-4-coumaroyl-CoA + 3 malonyl-CoA + 3 H(+) = 2',4,4',6'-tetrahydroxychalcone + 3 CO2 + 4 CoA. The protein operates within secondary metabolite biosynthesis; flavonoid biosynthesis. In terms of biological role, the primary product of this enzyme is 4,2',4',6'-tetrahydroxychalcone (also termed naringenin-chalcone or chalcone) which can under specific conditions spontaneously isomerize into naringenin. The chain is Chalcone synthase D (CHSD) from Petunia hybrida (Petunia).